Consider the following 92-residue polypeptide: Small ribosomal subunit protein uS19 (92 aa).

Belongs to the universal ribosomal protein uS19 family.

Functionally, protein S19 forms a complex with S13 that binds strongly to the 16S ribosomal RNA. The chain is Small ribosomal subunit protein uS19 (rpsS) from Halalkalibacterium halodurans (strain ATCC BAA-125 / DSM 18197 / FERM 7344 / JCM 9153 / C-125) (Bacillus halodurans).